The sequence spans 353 residues: MARIIALDGAQGEGGGQILRSALSLSMITGQPFEMSGIRAGRAKPGLLRQHLTAVRAATEICGAQVNGDELGSQQLRFTPGPIRGGEYRFAIGSAGSCMLVLQTVLPALWFADGSSRVEVHGGTHNQAAPSADFICRVWEPLLARMGISQRTTLIKHGFYPAGGGAAATVVEPATSLRGLTLISRGETLRTTAEALLAAVPYHVGEREVATLEAHFPQAEKNVVALEAHFPQAEKNVVALEGGCGPGNALSLMIQSEQLTELFAAFGVKGTSAEAVANQVAHEARRYLASPAAVGEHLADQLILPLALAGEGAFTVARASAHLLTNIVVVERFLPVRFSCEATESGYLVRVSD.

ATP is bound by residues Gln103 and 297-301; that span reads HLADQ. The active-site Tele-AMP-histidine intermediate is His322.

Belongs to the RNA 3'-terminal cyclase family. Type 1 subfamily.

The protein resides in the cytoplasm. It carries out the reaction a 3'-end 3'-phospho-ribonucleotide-RNA + ATP = a 3'-end 2',3'-cyclophospho-ribonucleotide-RNA + AMP + diphosphate. In terms of biological role, catalyzes the conversion of 3'-phosphate to a 2',3'-cyclic phosphodiester at the end of RNA. The mechanism of action of the enzyme occurs in 3 steps: (A) adenylation of the enzyme by ATP; (B) transfer of adenylate to an RNA-N3'P to produce RNA-N3'PP5'A; (C) and attack of the adjacent 2'-hydroxyl on the 3'-phosphorus in the diester linkage to produce the cyclic end product. The biological role of this enzyme is unknown but it is likely to function in some aspects of cellular RNA processing. This is RNA 3'-terminal phosphate cyclase from Salmonella heidelberg (strain SL476).